Here is a 655-residue protein sequence, read N- to C-terminus: uncharacterized protein (655 aa).

A PE-PPE domain is found at 245–469; that stretch reads PGVIAQALFT…NLKVIVNLGY (225 aa).

It belongs to the mycobacterial PPE family.

This is an uncharacterized protein from Mycobacterium tuberculosis (strain ATCC 25618 / H37Rv).